The chain runs to 326 residues: Adenosine receptor A1 (326 aa).

Topologically, residues 1–10 (MPPYISAFQA) are extracellular. The chain crosses the membrane as a helical span at residues 11-33 (AYIGIEVLIALVSVPGNVLVIWA). Over 34 to 46 (VKVNQALRDATFC) the chain is Cytoplasmic. The helical transmembrane segment at 47-69 (FIVSLAVADVAVGALVIPLAILI) threads the bilayer. Residues 70 to 80 (NIGPQTYFHTC) lie on the Extracellular side of the membrane. Residues C80 and C169 are joined by a disulfide bond. Residues 81 to 102 (LMVACPVLILTQSSILALLAIA) form a helical membrane-spanning segment. Topologically, residues 103–123 (VDRYLRVKIPLRYKTVVTQRR) are cytoplasmic. The chain crosses the membrane as a helical span at residues 124–146 (AAVAIAGCWILSLVVGLTPMFGW). The Extracellular segment spans residues 147–176 (NNLSEVEQAWIANGSVGEPVIKCEFEKVIS). 2 N-linked (GlcNAc...) asparagine glycosylation sites follow: N148 and N159. Residues 177 to 201 (MEYMVYFNFFVWVLPPLLLMVLIYL) traverse the membrane as a helical segment. Over 202 to 235 (EVFYLIRKQLNKKVSASSGDPQKYYGKELKIAKS) the chain is Cytoplasmic. A helical transmembrane segment spans residues 236 to 259 (LALILFLFALSWLPLHILNCITLF). Residues 260-267 (CPTCQKPS) are Extracellular-facing. Residues 268–292 (ILIYIAIFLTHGNSAMNPIVYAFRI) traverse the membrane as a helical segment. Topologically, residues 293 to 326 (HKFRVTFLKIWNDHFRCQPKPPIEEDIPEEKADD) are cytoplasmic. A lipid anchor (S-palmitoyl cysteine) is attached at C309.

It belongs to the G-protein coupled receptor 1 family.

It localises to the cell membrane. Its function is as follows. Receptor for adenosine. The activity of this receptor is mediated by G proteins which inhibit adenylyl cyclase. The protein is Adenosine receptor A1 (Adora1) of Mus musculus (Mouse).